The following is a 599-amino-acid chain: UvrABC system protein C (599 aa).

In terms of domain architecture, GIY-YIG spans 15-93; sequence DNPGVYQYYD…IKTLQPRYNI (79 aa). Residues 207-242 form the UVR domain; that stretch reads KDSMKDFKKVMTNLAQNMHFEEAQKIKEKIEILENY.

It belongs to the UvrC family. As to quaternary structure, interacts with UvrB in an incision complex.

It localises to the cytoplasm. Functionally, the UvrABC repair system catalyzes the recognition and processing of DNA lesions. UvrC both incises the 5' and 3' sides of the lesion. The N-terminal half is responsible for the 3' incision and the C-terminal half is responsible for the 5' incision. In Flavobacterium psychrophilum (strain ATCC 49511 / DSM 21280 / CIP 103535 / JIP02/86), this protein is UvrABC system protein C.